Here is a 330-residue protein sequence, read N- to C-terminus: Zinc finger protein Gfi-1b (330 aa).

The SNAG domain stretch occupies residues 1–20 (MPRSFLVKSKKAHTYHQPRA). Disordered regions lie at residues 1 to 21 (MPRS…PRAQ) and 75 to 99 (MASA…SESP). Position 8 is an N6,N6-dimethyllysine (K8). The tract at residues 91–330 (GESPLSESPP…RHRESQHNLK (240 aa)) is interaction with ARIH2. 6 C2H2-type zinc fingers span residues 163–186 (YHCV…RRSH), 192–214 (FACD…THVH), 220–242 (FECR…LLIH), 248–270 (YPCQ…TYIH), 276–298 (HKCQ…SRKH), and 304–327 (FSCE…ESQH). Positions 164–330 (HCVKCNKVFS…RHRESQHNLK (167 aa)) are mediates interaction with GATA1.

Interacts with histone methyltransferases EHMT2 and SUV39H1. Interacts with ARIH2 (via RING-type 2) and with RUNX1T1. Forms a complex with GATA1. Component of a RCOR-GFI-KDM1A-HDAC complex. Interacts directly with RCOR1, KDM1A and HDAC2. Methylation at Lys-8 in the SNAG domain seems required for the recruitment of the corepressor complex. As to expression, expressed in bone marrow and in spleen. Detected in hematopoietic stem cells, erythroblasts, and megakaryocytes. Expressed in thymocytes.

Its subcellular location is the nucleus. Essential proto-oncogenic transcriptional regulator necessary for development and differentiation of erythroid and megakaryocytic lineages. Component of a RCOR-GFI-KDM1A-HDAC complex that suppresses, via histone deacetylase (HDAC) recruitment, a number of genes implicated in multilineage blood cell development and controls hematopoietic differentiation. Transcriptional repressor or activator depending on both promoter and cell type context; represses promoter activity of SOCS1 and SOCS3 and thus, may regulate cytokine signaling pathways. Cooperates with GATA1 to repress target gene transcription, such as the apoptosis regulator BCL2L1; GFI1B silencing in leukemic cell lines markedly increase apoptosis rate. Inhibits down-regulation of MYC and MYB as well as the cyclin-dependent kinase inhibitor CDKN1A/P21WAF1 in IL6-treated myelomonocytic cells. Represses expression of GATA3 in T-cell lymphomas and inhibits GATA1-mediated transcription; as GATA1 also mediates erythroid GFI1B transcription, both GATA1 and GFI1B participate in a feedback regulatory pathway controlling the expression of GFI1B gene in erythroid cells. Suppresses GATA1-mediated stimulation of GFI1B promoter through protein interaction. Binds to gamma-satellite DNA and to its own promoter, auto-repressing its own expression. Alters histone methylation by recruiting histone methyltransferase to target genes promoters. Plays a role in heterochromatin formation. The chain is Zinc finger protein Gfi-1b (Gfi1b) from Mus musculus (Mouse).